A 273-amino-acid polypeptide reads, in one-letter code: Tryptophan synthase alpha chain (273 aa).

Residues E49 and D60 each act as proton acceptor in the active site.

It belongs to the TrpA family. Tetramer of two alpha and two beta chains.

It catalyses the reaction (1S,2R)-1-C-(indol-3-yl)glycerol 3-phosphate + L-serine = D-glyceraldehyde 3-phosphate + L-tryptophan + H2O. Its pathway is amino-acid biosynthesis; L-tryptophan biosynthesis; L-tryptophan from chorismate: step 5/5. The alpha subunit is responsible for the aldol cleavage of indoleglycerol phosphate to indole and glyceraldehyde 3-phosphate. The protein is Tryptophan synthase alpha chain of Thiobacillus denitrificans (strain ATCC 25259 / T1).